Reading from the N-terminus, the 234-residue chain is MAKVSQRVKKIQTKVELRPYKGTEALNLLKELATAKFTETAEAHISLKIDTKYADQQLRTTLVLPKGTGKKVRIAVVAQGEKINEALAAGADLAGAEDLIQNIMKGDLDFDRLIATPDMMPAIAKLGKVLGPRGLMPSPKSGTVTADIKEAIDEFKKGKLEYRADKSGIVHILFGKTDFSVEDLLANLEAVQESIDKNRPSGVKGRYWKSFYICSTMGPSIQLDISEFRDKVFS.

The protein belongs to the universal ribosomal protein uL1 family. In terms of assembly, part of the 50S ribosomal subunit.

Its subcellular location is the plastid. The protein resides in the chloroplast. Binds directly to 23S rRNA. Might be involved in E site tRNA release (Potential). The protein is Large ribosomal subunit protein uL1c (rpl1) of Rhodomonas salina (Cryptomonas salina).